A 126-amino-acid polypeptide reads, in one-letter code: Small ribosomal subunit protein uS12 (126 aa).

The tract at residues 1–26 (MPTINQLVRKGRASETTKSKSPALQD) is disordered. Asp89 carries the 3-methylthioaspartic acid modification. The interval 103–126 (DTQGVKDRKQARSKYGAKRAKAGK) is disordered. The span at 113–126 (ARSKYGAKRAKAGK) shows a compositional bias: basic residues.

Belongs to the universal ribosomal protein uS12 family. Part of the 30S ribosomal subunit. Contacts proteins S8 and S17. May interact with IF1 in the 30S initiation complex.

Functionally, with S4 and S5 plays an important role in translational accuracy. In terms of biological role, interacts with and stabilizes bases of the 16S rRNA that are involved in tRNA selection in the A site and with the mRNA backbone. Located at the interface of the 30S and 50S subunits, it traverses the body of the 30S subunit contacting proteins on the other side and probably holding the rRNA structure together. The combined cluster of proteins S8, S12 and S17 appears to hold together the shoulder and platform of the 30S subunit. This Paraburkholderia xenovorans (strain LB400) protein is Small ribosomal subunit protein uS12.